The chain runs to 195 residues: MIKGVEGEITEISGNEVTLKAGQFYLNILCSTNTIKELSLSAKVHLLTYLSFSADRAPEIYGFKDRAEYNVFLMLLKANKIGPKMALKILSATSPEMLQKMIASKDISGLSRLPGLGKKTAERLVSELYDLVKDYAVEFPKELSDVSEDAVGALTALGFDMTSAKLAVNEVLKEQTVENTQELVRKALRKLNKTR.

Positions 1–64 are domain I; that stretch reads MIKGVEGEIT…DRAPEIYGFK (64 aa). The interval 65–137 is domain II; it reads DRAEYNVFLM…LYDLVKDYAV (73 aa). A flexible linker region spans residues 137-141; that stretch reads VEFPK. The domain III stretch occupies residues 142-195; that stretch reads ELSDVSEDAVGALTALGFDMTSAKLAVNEVLKEQTVENTQELVRKALRKLNKTR.

The protein belongs to the RuvA family. Homotetramer. Forms an RuvA(8)-RuvB(12)-Holliday junction (HJ) complex. HJ DNA is sandwiched between 2 RuvA tetramers; dsDNA enters through RuvA and exits via RuvB. An RuvB hexamer assembles on each DNA strand where it exits the tetramer. Each RuvB hexamer is contacted by two RuvA subunits (via domain III) on 2 adjacent RuvB subunits; this complex drives branch migration. In the full resolvosome a probable DNA-RuvA(4)-RuvB(12)-RuvC(2) complex forms which resolves the HJ.

Its subcellular location is the cytoplasm. Functionally, the RuvA-RuvB-RuvC complex processes Holliday junction (HJ) DNA during genetic recombination and DNA repair, while the RuvA-RuvB complex plays an important role in the rescue of blocked DNA replication forks via replication fork reversal (RFR). RuvA specifically binds to HJ cruciform DNA, conferring on it an open structure. The RuvB hexamer acts as an ATP-dependent pump, pulling dsDNA into and through the RuvAB complex. HJ branch migration allows RuvC to scan DNA until it finds its consensus sequence, where it cleaves and resolves the cruciform DNA. This is Holliday junction branch migration complex subunit RuvA from Kosmotoga olearia (strain ATCC BAA-1733 / DSM 21960 / TBF 19.5.1).